The sequence spans 387 residues: Major outer membrane protein P.IA (387 aa).

An N-terminal signal peptide occupies residues 1 to 19 (MRKKLTALVLSALPLAAVA).

Belongs to the Gram-negative porin family. Homotrimer.

The protein localises to the cell outer membrane. Its function is as follows. Serves as a slightly cation selective porin. Major antigen on the gonococcal cell surface and it may have pathogenic properties in addition to its porin activity. This is Major outer membrane protein P.IA (porA) from Neisseria meningitidis serogroup C.